The following is a 719-amino-acid chain: DNA ligase (719 aa).

NAD(+)-binding positions include 42-46 (DAEYD), 91-92 (SL), and E125. The active-site N6-AMP-lysine intermediate is the K127. The NAD(+) site is built by R148, E184, K300, and K324. C429, C432, C447, and C453 together coordinate Zn(2+). A BRCT domain is found at 638–719 (TASSPIAEKI…WMRLIKGHNI (82 aa)).

Belongs to the NAD-dependent DNA ligase family. LigA subfamily. It depends on Mg(2+) as a cofactor. Mn(2+) serves as cofactor.

The catalysed reaction is NAD(+) + (deoxyribonucleotide)n-3'-hydroxyl + 5'-phospho-(deoxyribonucleotide)m = (deoxyribonucleotide)n+m + AMP + beta-nicotinamide D-nucleotide.. In terms of biological role, DNA ligase that catalyzes the formation of phosphodiester linkages between 5'-phosphoryl and 3'-hydroxyl groups in double-stranded DNA using NAD as a coenzyme and as the energy source for the reaction. It is essential for DNA replication and repair of damaged DNA. The sequence is that of DNA ligase from Bartonella tribocorum (strain CIP 105476 / IBS 506).